A 689-amino-acid chain; its full sequence is Armadillo-like helical domain-containing protein 3 (689 aa).

The helical transmembrane segment at 520–538 (IFQLALQVVNLFNMFITYG) threads the bilayer.

It belongs to the ARMH3 family.

It is found in the golgi apparatus membrane. The protein resides in the cytoplasm. May be involved in Golgi maintenance and protein secretion. The protein is Armadillo-like helical domain-containing protein 3 of Danio rerio (Zebrafish).